Here is a 181-residue protein sequence, read N- to C-terminus: Peptidyl-tRNA hydrolase (181 aa).

Residue tyrosine 14 participates in tRNA binding. Histidine 19 functions as the Proton acceptor in the catalytic mechanism. Positions 62, 64, and 108 each coordinate tRNA.

It belongs to the PTH family. As to quaternary structure, monomer.

It localises to the cytoplasm. It carries out the reaction an N-acyl-L-alpha-aminoacyl-tRNA + H2O = an N-acyl-L-amino acid + a tRNA + H(+). Its function is as follows. Hydrolyzes ribosome-free peptidyl-tRNAs (with 1 or more amino acids incorporated), which drop off the ribosome during protein synthesis, or as a result of ribosome stalling. Catalyzes the release of premature peptidyl moieties from peptidyl-tRNA molecules trapped in stalled 50S ribosomal subunits, and thus maintains levels of free tRNAs and 50S ribosomes. The protein is Peptidyl-tRNA hydrolase of Campylobacter jejuni subsp. doylei (strain ATCC BAA-1458 / RM4099 / 269.97).